A 235-amino-acid chain; its full sequence is Uracil-DNA glycosylase (235 aa).

Residue Asp-71 is the Proton acceptor of the active site.

This sequence belongs to the uracil-DNA glycosylase (UDG) superfamily. UNG family.

It is found in the cytoplasm. The enzyme catalyses Hydrolyzes single-stranded DNA or mismatched double-stranded DNA and polynucleotides, releasing free uracil.. Excises uracil residues from the DNA which can arise as a result of misincorporation of dUMP residues by DNA polymerase or due to deamination of cytosine. This is Uracil-DNA glycosylase from Helicobacter hepaticus (strain ATCC 51449 / 3B1).